We begin with the raw amino-acid sequence, 26 residues long: Turripeptide OL57 (26 aa).

In terms of processing, contains 2 disulfide bonds. In terms of tissue distribution, expressed by the venom duct.

Its subcellular location is the secreted. In terms of biological role, acts as a neurotoxin by inhibiting an ion channel. The sequence is that of Turripeptide OL57 from Iotyrris olangoensis (Sea snail).